A 230-amino-acid polypeptide reads, in one-letter code: PsbP-like protein 1, chloroplastic (230 aa).

The protein belongs to the PsbP family.

It is found in the plastid. The protein localises to the chloroplast thylakoid lumen. Functionally, required for efficient repair of photodamaged PSII, but not tightly associated with the complex. The protein is PsbP-like protein 1, chloroplastic (PPL1) of Arabidopsis thaliana (Mouse-ear cress).